A 714-amino-acid polypeptide reads, in one-letter code: Cyclomaltodextrin glucanotransferase (714 aa).

A signal peptide spans 1-27; it reads MKSRYKRLTSLALSLSMALGISLPAWA. Residues 28-165 form an A1 region; that stretch reads SPDTSVDNKV…NIKVVIDFAP (138 aa). Ca(2+) is bound by residues Asp54, Asn59, Asn60, Gly78, and Asp80. 127–128 contacts substrate; the sequence is YW. Position 166 (Asn166) interacts with Ca(2+). The interval 166 to 229 is b; it reads NHTSPADRDN…NLYDLADINH (64 aa). His167 contributes to the substrate binding site. Ile217 provides a ligand contact to Ca(2+). Substrate is bound at residue 220-223; it reads NLYD. Ca(2+) is bound at residue Asp226. Residues 230 to 434 are A2; sequence NNNAMDAYFK…LRKSNPAIAY (205 aa). Arg254 contacts substrate. Asp256 (nucleophile) is an active-site residue. 259–260 provides a ligand contact to substrate; sequence KH. Position 260 (His260) interacts with Ca(2+). The active-site Proton donor is Glu285. Positions 355, 399, and 403 each coordinate substrate. Positions 435-523 are c; sequence GTTTERWVNN…GTAVWQYTAP (89 aa). Residues 524-610 are d; that stretch reads ETSPAIGNVG…SNTFKSFNVL (87 aa). The region spanning 527–607 is the IPT/TIG domain; sequence PAIGNVGPTM…GTASNTFKSF (81 aa). The CBM20 domain occupies 609–714; that stretch reads VLTGDQVTVR…VGTVTVDWQN (106 aa). An e region spans residues 611–714; sequence TGDQVTVRFL…VGTVTVDWQN (104 aa).

The protein belongs to the glycosyl hydrolase 13 family. In terms of assembly, monomer. Ca(2+) serves as cofactor.

Its subcellular location is the secreted. It carries out the reaction Cyclizes part of a (1-&gt;4)-alpha-D-glucan chain by formation of a (1-&gt;4)-alpha-D-glucosidic bond.. This Paenibacillus macerans (Bacillus macerans) protein is Cyclomaltodextrin glucanotransferase (cgtM).